We begin with the raw amino-acid sequence, 280 residues long: Eukaryotic translation initiation factor 3 subunit F-1 (280 aa).

The MPN domain maps to 8 to 138 (VRVHPVVLFQ…LRAYVCIQLG (131 aa)).

The protein belongs to the eIF-3 subunit F family. Component of the eukaryotic translation initiation factor 3 (eIF-3) complex. The eIF-3 complex interacts with pix.

It localises to the cytoplasm. In terms of biological role, component of the eukaryotic translation initiation factor 3 (eIF-3) complex, which is involved in protein synthesis of a specialized repertoire of mRNAs and, together with other initiation factors, stimulates binding of mRNA and methionyl-tRNAi to the 40S ribosome. The eIF-3 complex specifically targets and initiates translation of a subset of mRNAs involved in cell proliferation. This is Eukaryotic translation initiation factor 3 subunit F-1 from Drosophila virilis (Fruit fly).